We begin with the raw amino-acid sequence, 660 residues long: Putative ATP-dependent RNA helicase Pl10 (660 aa).

The span at 1-11 shows a compositional bias: acidic residues; it reads MSHVAEEDELG. A disordered region spans residues 1–117; that stretch reads MSHVAEEDEL…SRGGRSGFGK (117 aa). Residue Ser-2 is modified to N-acetylserine. Low complexity predominate over residues 12–21; the sequence is LDQQLAGLDL. The segment covering 24-34 has biased composition (polar residues); the sequence is RDSQSGGSTAS. Over residues 44–66 the composition is skewed to basic and acidic residues; the sequence is RNREAAKAFYDKDGSRWSKDKDA. The residue at position 55 (Lys-55) is an N6-acetyllysine. A phosphoserine mark is found at Ser-80, Ser-84, and Ser-89. A compositionally biased stretch (basic and acidic residues) spans 93–103; it reads GRFDERGRSDY. The residue at position 100 (Arg-100) is an Omega-N-methylarginine. At Ser-101 the chain carries Phosphoserine. The residue at position 103 (Tyr-103) is a Phosphotyrosine. An Omega-N-methylarginine modification is found at Arg-109. Lys-117 is subject to N6-acetyllysine. The short motif at 179–207 is the Q motif element; the sequence is ESFSDVEMGEIIMGNIELTRYTRPTPVQK. Position 182 is a phosphoserine (Ser-182). Residue 199 to 206 coordinates ATP; that stretch reads YTRPTPVQ. The 193-residue stretch at 210-402 folds into the Helicase ATP-binding domain; it reads IPIIKEKRDL…RDFLDEYIFL (193 aa). Lys-214 is covalently cross-linked (Glycyl lysine isopeptide (Lys-Gly) (interchain with G-Cter in SUMO2)). 223–230 is a binding site for ATP; it reads AQTGSGKT. The DEAD box signature appears at 346–349; it reads DEAD. The Helicase C-terminal domain occupies 413–574; the sequence is NITQKVVWVE…EVPSWLENMA (162 aa). Ser-455 carries the phosphoserine modification. Arg-590 is subject to Omega-N-methylarginine. A phosphoserine mark is found at Ser-592, Ser-603, and Ser-610. Residues 598 to 632 form a disordered region; sequence RDYRQSSGASSSSFSSGRASNSRSGGGSHGSSRGF. A compositionally biased stretch (low complexity) spans 602-620; it reads QSSGASSSSFSSGRASNSR. Residues Arg-615 and Arg-630 each carry the omega-N-methylarginine modification. Gly residues predominate over residues 621-632; it reads SGGGSHGSSRGF.

It belongs to the DEAD box helicase family. DDX3/DED1 subfamily. In terms of tissue distribution, testis.

It catalyses the reaction ATP + H2O = ADP + phosphate + H(+). Putative ATP-dependent RNA helicase. Possible role in a key step of the spermatogenic process. The protein is Putative ATP-dependent RNA helicase Pl10 (D1Pas1) of Mus musculus (Mouse).